We begin with the raw amino-acid sequence, 298 residues long: Ethanolamine ammonia-lyase small subunit (298 aa).

Val-210, Glu-231, and Cys-261 together coordinate adenosylcob(III)alamin.

This sequence belongs to the EutC family. In terms of assembly, the basic unit is a heterodimer which dimerizes to form tetramers. The heterotetramers trimerize; 6 large subunits form a core ring with 6 small subunits projecting outwards. Adenosylcob(III)alamin serves as cofactor.

The protein localises to the bacterial microcompartment. It catalyses the reaction ethanolamine = acetaldehyde + NH4(+). It functions in the pathway amine and polyamine degradation; ethanolamine degradation. Functionally, catalyzes the deamination of various vicinal amino-alcohols to oxo compounds. Allows this organism to utilize ethanolamine as the sole source of nitrogen and carbon in the presence of external vitamin B12. The protein is Ethanolamine ammonia-lyase small subunit of Salmonella agona (strain SL483).